The chain runs to 833 residues: MutS protein homolog 5 (833 aa).

Positions 1–45 (MAFRATPGRTPPGPGPRSGIPSASFPSPQPPMAGPGGIEEEDEEE) are disordered. 591 to 598 (GPNSSGKS) provides a ligand contact to ATP.

This sequence belongs to the DNA mismatch repair MutS family. Heterooligomer of MSH4 and MSH5. Interacts with HJURP. Interacts with REDIC1.

In terms of biological role, involved in DNA mismatch repair and meiotic recombination processes. Facilitates crossovers between homologs during meiosis. This chain is MutS protein homolog 5 (Msh5), found in Mus musculus (Mouse).